Reading from the N-terminus, the 96-residue chain is Small ribosomal subunit protein bS6 (96 aa).

This sequence belongs to the bacterial ribosomal protein bS6 family.

In terms of biological role, binds together with bS18 to 16S ribosomal RNA. In Streptococcus gordonii (strain Challis / ATCC 35105 / BCRC 15272 / CH1 / DL1 / V288), this protein is Small ribosomal subunit protein bS6.